The chain runs to 163 residues: Nucleotide-binding protein RER_17110 (163 aa).

It belongs to the YajQ family.

Functionally, nucleotide-binding protein. The sequence is that of Nucleotide-binding protein RER_17110 from Rhodococcus erythropolis (strain PR4 / NBRC 100887).